Consider the following 3082-residue polypeptide: Autotransporter adhesin BadA (3082 aa).

The N-terminal stretch at 1 to 47 is a signal peptide; the sequence is MKKLSVTSKRQYNLYASPISRRLSLLMKLSLETVTVMFLLGASPVLA. The segment at 48–376 is binds to host cells; the sequence is SNLALTGAKN…DAVNVAQLKA (329 aa). The tract at residues 48-2901 is surface exposed passenger domain; it reads SNLALTGAKN…KVQDIATVAD (2854 aa). The segment at 53 to 2850 is does not bind host cells, no host proangiogenic cytokine induction, collagen or fibronectin, no autoagglutination; it reads TGAKNLSQNS…DARHNGVDSK (2798 aa). Residues 470-2850 are required to bind fibronectin, not required for surface expression on bacteria, bacterial autoagglutination, host cell binding, collagen binding or host proangiogenic cytokine induction; it reads ITGVAEGTDA…DARHNGVDSK (2381 aa). Positions 2902–3027 are outer membrane translocation of the passenger domain; that stretch reads SAVKYEKDST…VSNLRYYDIP (126 aa). 4 beta stranded membrane passes run 3028-3039, 3044-3051, 3055-3065, and 3070-3082; these read GSLSLSFGTGIW, AFAIGAGY, DGNIRSNLSIT, and QWGVGAGITLRLK. The tract at residues 3028–3082 is translocator domain; sequence GSLSLSFGTGIWRSQSAFAIGAGYTSEDGNIRSNLSITSSGGQWGVGAGITLRLK.

Belongs to the autotransporter-2 (AT-2) (TC 1.B.40) family. In terms of assembly, homotrimer. Crystals of the head region form trimers.

The protein localises to the cell surface. It is found in the cell outer membrane. Mediates bacterial adherence to host endothelial cells and host extracellular matrix proteins (collagen type I, III, IV, laminin and fibronectin). Static versus dynamic adherence results differ slightly; in dynamic adherence studies bacteria bind to fixed components under a constant defined flow rate to simulate in vivo infection conditions. Induces secretion of host proangiogenic cytokines such as VEGFA, ADM, IGFBP-3 and IL-8. May prevent bacterial phagocytosis by macrophages. Probably mediates bacterial autoagglutination. Negatively impacts type IV secretion system effectors (VirB/D4 T4SS and its substrate Bep proteins), possibly by preventing close association of host and bacterial cells. This implies the 2 factors are expressed at different times during infection. The chain is Autotransporter adhesin BadA from Bartonella henselae (Rochalimaea henselae).